The following is a 799-amino-acid chain: Probable inorganic carbon transporter subunit DabA (799 aa).

The Zn(2+) site is built by Cys-303, Asp-305, His-479, and Cys-494. Residues 574–598 (AGAAAERSEALNGADPDKGVSETAS) form a disordered region.

This sequence belongs to the inorganic carbon transporter (TC 9.A.2) DabA family. In terms of assembly, forms a complex with DabB. Requires Zn(2+) as cofactor.

The protein resides in the cell membrane. Functionally, part of an energy-coupled inorganic carbon pump. The chain is Probable inorganic carbon transporter subunit DabA from Natronomonas pharaonis (strain ATCC 35678 / DSM 2160 / CIP 103997 / JCM 8858 / NBRC 14720 / NCIMB 2260 / Gabara) (Halobacterium pharaonis).